The following is a 730-amino-acid chain: Aspyridones cluster regulator apdR (730 aa).

A DNA-binding region (zn(2)-C6 fungal-type) is located at residues 20–46; sequence CTECRRRKIRCDQATPCRHCEKAALRC.

Its subcellular location is the nucleus. In terms of biological role, transcription factor involved in regulation of gene cluster that mediates the biosynthesis of aspyridones. The polypeptide is Aspyridones cluster regulator apdR (Emericella nidulans (strain FGSC A4 / ATCC 38163 / CBS 112.46 / NRRL 194 / M139) (Aspergillus nidulans)).